The sequence spans 236 residues: Orotidine 5'-phosphate decarboxylase (236 aa).

Substrate contacts are provided by residues Asp-12, Lys-34, 60–69, Thr-123, Arg-184, Gln-193, Gly-213, and Arg-214; that span reads DLKLHDIPHT. Residue Lys-62 is the Proton donor of the active site.

The protein belongs to the OMP decarboxylase family. Type 1 subfamily. In terms of assembly, homodimer.

It carries out the reaction orotidine 5'-phosphate + H(+) = UMP + CO2. It participates in pyrimidine metabolism; UMP biosynthesis via de novo pathway; UMP from orotate: step 2/2. Functionally, catalyzes the decarboxylation of orotidine 5'-monophosphate (OMP) to uridine 5'-monophosphate (UMP). This Gluconobacter oxydans (strain 621H) (Gluconobacter suboxydans) protein is Orotidine 5'-phosphate decarboxylase.